The chain runs to 190 residues: Segregation and condensation protein B (190 aa).

Belongs to the ScpB family. In terms of assembly, homodimer. Homodimerization may be required to stabilize the binding of ScpA to the Smc head domains. Component of a cohesin-like complex composed of ScpA, ScpB and the Smc homodimer, in which ScpA and ScpB bind to the head domain of Smc. The presence of the three proteins is required for the association of the complex with DNA.

Its subcellular location is the cytoplasm. Participates in chromosomal partition during cell division. May act via the formation of a condensin-like complex containing Smc and ScpA that pull DNA away from mid-cell into both cell halves. This is Segregation and condensation protein B from Bacillus cereus (strain ATCC 14579 / DSM 31 / CCUG 7414 / JCM 2152 / NBRC 15305 / NCIMB 9373 / NCTC 2599 / NRRL B-3711).